Consider the following 211-residue polypeptide: Dihydrofolate reductase (211 aa).

Residues 7 to 210 enclose the DHFR domain; sequence PIVGIVACLQ…YCFEFTLYNR (204 aa). NADP(+) is bound by residues Ala-13 and 20–26; that span reads GIGFRGG. 34–39 contacts substrate; that stretch reads EMKYFR. Residue 58 to 60 participates in NADP(+) binding; the sequence is RKT. Arg-74 lines the substrate pocket. NADP(+) is bound by residues 80–82 and 123–130; these read SRS and GGGEVYSQ.

This sequence belongs to the dihydrofolate reductase family.

The enzyme catalyses (6S)-5,6,7,8-tetrahydrofolate + NADP(+) = 7,8-dihydrofolate + NADPH + H(+). Its pathway is cofactor biosynthesis; tetrahydrofolate biosynthesis; 5,6,7,8-tetrahydrofolate from 7,8-dihydrofolate: step 1/1. Its function is as follows. Key enzyme in folate metabolism. Catalyzes an essential reaction for de novo glycine and purine synthesis, and for DNA precursor synthesis. The sequence is that of Dihydrofolate reductase (DFR1) from Saccharomyces cerevisiae (strain ATCC 204508 / S288c) (Baker's yeast).